The primary structure comprises 189 residues: uncharacterized protein (189 aa).

Belongs to the OsmC/Ohr family.

This is an uncharacterized protein from Methanocaldococcus jannaschii (strain ATCC 43067 / DSM 2661 / JAL-1 / JCM 10045 / NBRC 100440) (Methanococcus jannaschii).